A 1040-amino-acid polypeptide reads, in one-letter code: Tudor domain-containing protein 5 (1040 aa).

HTH OST-type domains follow at residues 7–80 (IQDC…KAIP), 122–197 (VPPI…LKKS), and 291–365 (VDPE…FDAD). In terms of domain architecture, Tudor spans 533 to 592 (FIQPGHLCCVKISEDKWWYRVIIHRILGKKEVEVFYPDFGNIGTVQKSSLRFLKCCYTKL). Residue S809 is modified to Phosphoserine. 2 disordered regions span residues 857–891 (DVKG…YPLD) and 912–975 (AERS…AKDK). Polar residues-rich tracts occupy residues 872–891 (EKNT…YPLD) and 912–924 (AERS…SIQT). Phosphoserine is present on S943. Over residues 946–956 (NHSGSVESSPG) the composition is skewed to polar residues. The span at 958–975 (LKKEDVSNSRAEATAKDK) shows a compositional bias: basic and acidic residues.

The protein belongs to the TDRD5 family. In terms of tissue distribution, gonad-specific. Mainly expressed in testis. Present at low level in ovary (at protein level).

Its subcellular location is the cytoplasm. Its function is as follows. Required during spermiogenesis to participate in the repression transposable elements and prevent their mobilization, which is essential for the germline integrity. Probably acts via the piRNA metabolic process, which mediates the repression of transposable elements during meiosis by forming complexes composed of piRNAs and Piwi proteins and govern the methylation and subsequent repression of transposons. Required for chromatoid body (CB) assembly. This Mus musculus (Mouse) protein is Tudor domain-containing protein 5 (Tdrd5).